The sequence spans 497 residues: Probable cytosol aminopeptidase (497 aa).

2 residues coordinate Mn(2+): Lys-264 and Asp-269. The active site involves Lys-276. 3 residues coordinate Mn(2+): Asp-287, Asp-347, and Glu-349. Arg-351 is an active-site residue.

This sequence belongs to the peptidase M17 family. Mn(2+) is required as a cofactor.

It is found in the cytoplasm. It catalyses the reaction Release of an N-terminal amino acid, Xaa-|-Yaa-, in which Xaa is preferably Leu, but may be other amino acids including Pro although not Arg or Lys, and Yaa may be Pro. Amino acid amides and methyl esters are also readily hydrolyzed, but rates on arylamides are exceedingly low.. The enzyme catalyses Release of an N-terminal amino acid, preferentially leucine, but not glutamic or aspartic acids.. Its function is as follows. Presumably involved in the processing and regular turnover of intracellular proteins. Catalyzes the removal of unsubstituted N-terminal amino acids from various peptides. In Thermosynechococcus vestitus (strain NIES-2133 / IAM M-273 / BP-1), this protein is Probable cytosol aminopeptidase.